Consider the following 55-residue polypeptide: Protein CADMIUM TOLERANCE 1 (55 aa).

A helical transmembrane segment spans residues 24-40; the sequence is GCLYACIFTALCCFCCY.

This sequence belongs to the CYSTM1 family.

The protein resides in the cell membrane. It localises to the secreted. Its subcellular location is the cell wall. In terms of biological role, confers resistance to heavy metal ions (e.g. cadmium (CdCl(2)) and copper (CuCl(2))) by chelating them at the plasma membrane of root cells, thus stopping their entry and reducing their accumulation. Binds to aluminium (Al). In Oryza sativa subsp. indica (Rice), this protein is Protein CADMIUM TOLERANCE 1.